Here is a 159-residue protein sequence, read N- to C-terminus: SsrA-binding protein (159 aa).

It belongs to the SmpB family.

The protein localises to the cytoplasm. Required for rescue of stalled ribosomes mediated by trans-translation. Binds to transfer-messenger RNA (tmRNA), required for stable association of tmRNA with ribosomes. tmRNA and SmpB together mimic tRNA shape, replacing the anticodon stem-loop with SmpB. tmRNA is encoded by the ssrA gene; the 2 termini fold to resemble tRNA(Ala) and it encodes a 'tag peptide', a short internal open reading frame. During trans-translation Ala-aminoacylated tmRNA acts like a tRNA, entering the A-site of stalled ribosomes, displacing the stalled mRNA. The ribosome then switches to translate the ORF on the tmRNA; the nascent peptide is terminated with the 'tag peptide' encoded by the tmRNA and targeted for degradation. The ribosome is freed to recommence translation, which seems to be the essential function of trans-translation. The polypeptide is SsrA-binding protein (Salinispora tropica (strain ATCC BAA-916 / DSM 44818 / JCM 13857 / NBRC 105044 / CNB-440)).